The following is a 156-amino-acid chain: Arginine repressor (156 aa).

It belongs to the ArgR family.

It localises to the cytoplasm. Its pathway is amino-acid biosynthesis; L-arginine biosynthesis [regulation]. Its function is as follows. Regulates arginine biosynthesis genes. The polypeptide is Arginine repressor (Salmonella paratyphi C (strain RKS4594)).